We begin with the raw amino-acid sequence, 56 residues long: uncharacterized protein (56 aa).

A compositionally biased stretch (basic residues) spans 21-38 (HTHTPHPHHTHTHTHHTP). The disordered stretch occupies residues 21–40 (HTHTPHPHHTHTHTHHTPTH).

This is an uncharacterized protein from Saccharomyces cerevisiae (strain ATCC 204508 / S288c) (Baker's yeast).